The sequence spans 407 residues: Imidazolonepropionase (407 aa).

2 residues coordinate Fe(3+): H68 and H70. Zn(2+)-binding residues include H68 and H70. The 4-imidazolone-5-propanoate site is built by R77, Y140, and H173. Y140 is an N-formimidoyl-L-glutamate binding site. H238 is a Fe(3+) binding site. Position 238 (H238) interacts with Zn(2+). Q241 lines the 4-imidazolone-5-propanoate pocket. Position 313 (D313) interacts with Fe(3+). D313 contacts Zn(2+). Residues N315 and G317 each coordinate N-formimidoyl-L-glutamate. T318 contributes to the 4-imidazolone-5-propanoate binding site.

It belongs to the metallo-dependent hydrolases superfamily. HutI family. It depends on Zn(2+) as a cofactor. Requires Fe(3+) as cofactor.

It is found in the cytoplasm. It catalyses the reaction 4-imidazolone-5-propanoate + H2O = N-formimidoyl-L-glutamate. It participates in amino-acid degradation; L-histidine degradation into L-glutamate; N-formimidoyl-L-glutamate from L-histidine: step 3/3. Functionally, catalyzes the hydrolytic cleavage of the carbon-nitrogen bond in imidazolone-5-propanoate to yield N-formimidoyl-L-glutamate. It is the third step in the universal histidine degradation pathway. In Burkholderia lata (strain ATCC 17760 / DSM 23089 / LMG 22485 / NCIMB 9086 / R18194 / 383), this protein is Imidazolonepropionase.